A 277-amino-acid polypeptide reads, in one-letter code: Elongation factor 1-delta (277 aa).

Ala2 is modified (N-acetylalanine). An N6-acetyllysine modification is found at Lys17. Ser37, Ser44, Ser60, Ser86, and Ser106 each carry phosphoserine. Lys107 is modified (N6-acetyllysine). Residues 113–171 form a disordered region; it reads SALEKSSPAHRATTPQTQHVSPMRQVEPPSRKAATATEDDEDDDIDLFGSDEEEDKEAA. The residue at position 117 (Lys117) is an N6-acetyllysine; alternate. Lys117 carries the N6-succinyllysine; alternate modification. The residue at position 119 (Ser119) is a Phosphoserine. At Thr129 the chain carries Phosphothreonine. Phosphoserine is present on Ser133. Thr147 is modified (phosphothreonine). Positions 149 to 168 are enriched in acidic residues; that stretch reads TEDDEDDDIDLFGSDEEEDK. Residue Ser162 is modified to Phosphoserine; by CK2.

The protein belongs to the EF-1-beta/EF-1-delta family. EF-1 is composed of 4 subunits: alpha, beta, delta, and gamma.

In terms of biological role, EF-1-beta and EF-1-delta stimulate the exchange of GDP bound to EF-1-alpha to GTP. This Ovis aries (Sheep) protein is Elongation factor 1-delta (EEF1D).